Consider the following 208-residue polypeptide: MKINVVDHPLIKHKLTIMRKTDTGPKEFRELLKEITLLIAYEATRHLEIHETEIETPLEKTKGYFIDDKDVVIVPILRAGLGMSDGILQLLPNASVGHIGIYREPHTLEAVEYYAKLPKINENSFVFVLDPMLATGVSSVKALDIVKEHGAKNVILVTLIASPEGTRVVNDKHPDVIIYTASLDRELNSKGYILPGLGDAGDRLFRTK.

5-phospho-alpha-D-ribose 1-diphosphate is bound by residues arginine 78, arginine 103, and 130 to 138 (DPMLATGVS). Uracil is bound by residues isoleucine 193 and 198–200 (GDA). Aspartate 199 lines the 5-phospho-alpha-D-ribose 1-diphosphate pocket.

The protein belongs to the UPRTase family. Mg(2+) is required as a cofactor.

It catalyses the reaction UMP + diphosphate = 5-phospho-alpha-D-ribose 1-diphosphate + uracil. It functions in the pathway pyrimidine metabolism; UMP biosynthesis via salvage pathway; UMP from uracil: step 1/1. With respect to regulation, allosterically activated by GTP. In terms of biological role, catalyzes the conversion of uracil and 5-phospho-alpha-D-ribose 1-diphosphate (PRPP) to UMP and diphosphate. This Thermosipho africanus (strain TCF52B) protein is Uracil phosphoribosyltransferase.